The chain runs to 516 residues: Cytochrome P450 1A2 (516 aa).

O-linked (GlcNAc) serine glycosylation occurs at serine 69. Phenylalanine 226 serves as a coordination point for substrate. Position 458 (cysteine 458) interacts with heme.

Belongs to the cytochrome P450 family. In terms of assembly, interacts with PGRMC1; the interaction requires PGRMC1 homodimerization. The cofactor is heme.

The protein localises to the endoplasmic reticulum membrane. It is found in the microsome membrane. The enzyme catalyses an organic molecule + reduced [NADPH--hemoprotein reductase] + O2 = an alcohol + oxidized [NADPH--hemoprotein reductase] + H2O + H(+). It catalyses the reaction 17beta-estradiol + reduced [NADPH--hemoprotein reductase] + O2 = 2-hydroxy-17beta-estradiol + oxidized [NADPH--hemoprotein reductase] + H2O + H(+). It carries out the reaction 17beta-estradiol + reduced [NADPH--hemoprotein reductase] + O2 = 4-hydroxy-17beta-estradiol + oxidized [NADPH--hemoprotein reductase] + H2O + H(+). The catalysed reaction is estrone + reduced [NADPH--hemoprotein reductase] + O2 = 2-hydroxyestrone + oxidized [NADPH--hemoprotein reductase] + H2O + H(+). The enzyme catalyses estrone + reduced [NADPH--hemoprotein reductase] + O2 = 4-hydroxyestrone + oxidized [NADPH--hemoprotein reductase] + H2O + H(+). It catalyses the reaction cholesterol + reduced [NADPH--hemoprotein reductase] + O2 = 25-hydroxycholesterol + oxidized [NADPH--hemoprotein reductase] + H2O + H(+). It carries out the reaction all-trans-retinol + reduced [NADPH--hemoprotein reductase] + O2 = all-trans-retinal + oxidized [NADPH--hemoprotein reductase] + 2 H2O + H(+). The catalysed reaction is all-trans-retinal + reduced [NADPH--hemoprotein reductase] + O2 = all-trans-retinoate + oxidized [NADPH--hemoprotein reductase] + H2O + 2 H(+). The enzyme catalyses (5Z,8Z,11Z,14Z)-eicosatetraenoate + reduced [NADPH--hemoprotein reductase] + O2 = (14R,15S)-epoxy-(5Z,8Z,11Z)-eicosatrienoate + oxidized [NADPH--hemoprotein reductase] + H2O + H(+). It catalyses the reaction (5Z,8Z,11Z,14Z)-eicosatetraenoate + reduced [NADPH--hemoprotein reductase] + O2 = (14S,15R)-epoxy-(5Z,8Z,11Z)-eicosatrienoate + oxidized [NADPH--hemoprotein reductase] + H2O + H(+). It carries out the reaction (5Z,8Z,11Z,14Z,17Z)-eicosapentaenoate + reduced [NADPH--hemoprotein reductase] + O2 = (17R,18S)-epoxy-(5Z,8Z,11Z,14Z)-eicosatetraenoate + oxidized [NADPH--hemoprotein reductase] + H2O + H(+). The catalysed reaction is (4Z,7Z,10Z,13Z,16Z,19Z)-docosahexaenoate + reduced [NADPH--hemoprotein reductase] + O2 = (19R,20S)-epoxy-(4Z,7Z,10Z,13Z,16Z)-docosapentaenoate + oxidized [NADPH--hemoprotein reductase] + H2O + H(+). The enzyme catalyses (5S)-hydroperoxy-(6E,8Z,11Z,14Z)-eicosatetraenoate = 5-oxo-(6E,8Z,11Z,14Z)-eicosatetraenoate + H2O. It catalyses the reaction (12S)-hydroperoxy-(5Z,8Z,10E,14Z)-eicosatetraenoate = 12-oxo-(5Z,8Z,10E,14Z)-eicosatetraenoate + H2O. It carries out the reaction (15S)-hydroperoxy-(5Z,8Z,11Z,13E)-eicosatetraenoate = 15-oxo-(5Z,8Z,11Z,13E)-eicosatetraenoate + H2O. The catalysed reaction is (13S)-hydroperoxy-(9Z,11E)-octadecadienoate = 13-oxo-(9Z,11E)-octadecadienoate + H2O. The enzyme catalyses (5Z,8Z,11Z,14Z)-eicosatetraenoate + reduced [NADPH--hemoprotein reductase] + O2 = 13-hydroxy-(5Z,8Z,11Z,14Z)-eicosatetraenoate + oxidized [NADPH--hemoprotein reductase] + H2O + H(+). It catalyses the reaction (5Z,8Z,11Z,14Z)-eicosatetraenoate + reduced [NADPH--hemoprotein reductase] + O2 = 19-hydroxy-(5Z,8Z,11Z,14Z)-eicosatetraenoate + oxidized [NADPH--hemoprotein reductase] + H2O + H(+). It carries out the reaction (9Z,12Z)-octadecadienoate + reduced [NADPH--hemoprotein reductase] + O2 = 11-hydroxy-(9Z,12Z)-octadecadienoate + oxidized [NADPH--hemoprotein reductase] + H2O + H(+). It participates in cofactor metabolism; retinol metabolism. It functions in the pathway steroid metabolism; cholesterol metabolism. Its pathway is lipid metabolism; arachidonate metabolism. In terms of biological role, a cytochrome P450 monooxygenase involved in the metabolism of various endogenous substrates, including fatty acids, steroid hormones and vitamins. Mechanistically, uses molecular oxygen inserting one oxygen atom into a substrate, and reducing the second into a water molecule, with two electrons provided by NADPH via cytochrome P450 reductase (NADPH--hemoprotein reductase). Catalyzes the hydroxylation of carbon-hydrogen bonds. Exhibits high catalytic activity for the formation of hydroxyestrogens from estrone (E1) and 17beta-estradiol (E2), namely 2-hydroxy E1 and E2. Metabolizes cholesterol toward 25-hydroxycholesterol, a physiological regulator of cellular cholesterol homeostasis. May act as a major enzyme for all-trans retinoic acid biosynthesis in the liver. Catalyzes two successive oxidative transformation of all-trans retinol to all-trans retinal and then to the active form all-trans retinoic acid. Primarily catalyzes stereoselective epoxidation of the last double bond of polyunsaturated fatty acids (PUFA), displaying a strong preference for the (R,S) stereoisomer. Catalyzes bisallylic hydroxylation and omega-1 hydroxylation of PUFA. May also participate in eicosanoids metabolism by converting hydroperoxide species into oxo metabolites (lipoxygenase-like reaction, NADPH-independent). Plays a role in the oxidative metabolism of xenobiotics. Catalyzes the N-hydroxylation of heterocyclic amines and the O-deethylation of phenacetin. Metabolizes caffeine via N3-demethylation. This is Cytochrome P450 1A2 (CYP1A2) from Macaca fuscata fuscata (Japanese macaque).